A 102-amino-acid chain; its full sequence is MAGQKIRIRLKAYDHEVIDTSARKIVDTVTRTGAKVAGPVPLPTEKNVYCVIRSPHKYKDSREHFEMRTHKRLIDIIDPTPKTVDSLMRLDLPAGVDIEIKL.

Belongs to the universal ribosomal protein uS10 family. Part of the 30S ribosomal subunit.

In terms of biological role, involved in the binding of tRNA to the ribosomes. In Nocardioides sp. (strain ATCC BAA-499 / JS614), this protein is Small ribosomal subunit protein uS10.